The sequence spans 119 residues: NADH-quinone oxidoreductase subunit A (119 aa).

3 consecutive transmembrane segments (helical) span residues 9-29, 63-83, and 88-108; these read VLLF…LGYV, LVAI…PWAV, and VGGA…VGFV.

The protein belongs to the complex I subunit 3 family. As to quaternary structure, NDH-1 is composed of 14 different subunits. Subunits NuoA, H, J, K, L, M, N constitute the membrane sector of the complex.

Its subcellular location is the cell inner membrane. The catalysed reaction is a quinone + NADH + 5 H(+)(in) = a quinol + NAD(+) + 4 H(+)(out). In terms of biological role, NDH-1 shuttles electrons from NADH, via FMN and iron-sulfur (Fe-S) centers, to quinones in the respiratory chain. The immediate electron acceptor for the enzyme in this species is believed to be ubiquinone. Couples the redox reaction to proton translocation (for every two electrons transferred, four hydrogen ions are translocated across the cytoplasmic membrane), and thus conserves the redox energy in a proton gradient. The sequence is that of NADH-quinone oxidoreductase subunit A from Delftia acidovorans (strain DSM 14801 / SPH-1).